The primary structure comprises 193 residues: Ion-translocating oxidoreductase complex subunit A (193 aa).

6 consecutive transmembrane segments (helical) span residues 5–25 (LLLFVGTVLVNNFVLVKFLGL), 47–67 (FVMTLASICAWLIDTWILIPL), 72–92 (LRTLAFILVIAVVVQFTEMVV), 102–122 (LLGIFLPLITTNCAVLGVALL), 134–154 (ALYGFSAAVGFSLVMVLFAAI), and 171–191 (AIALITAGLMSLAFMGFSGLV).

The protein belongs to the NqrDE/RnfAE family. The complex is composed of six subunits: RnfA, RnfB, RnfC, RnfD, RnfE and RnfG.

It localises to the cell inner membrane. Part of a membrane-bound complex that couples electron transfer with translocation of ions across the membrane. This is Ion-translocating oxidoreductase complex subunit A from Citrobacter koseri (strain ATCC BAA-895 / CDC 4225-83 / SGSC4696).